Consider the following 248-residue polypeptide: Eukaryotic translation initiation factor 6 (248 aa).

Belongs to the eIF-6 family. As to quaternary structure, monomer. Associates with the 60S ribosomal subunit.

The protein resides in the cytoplasm. It localises to the nucleus. It is found in the nucleolus. Binds to the 60S ribosomal subunit and prevents its association with the 40S ribosomal subunit to form the 80S initiation complex in the cytoplasm. May also be involved in ribosome biogenesis. The sequence is that of Eukaryotic translation initiation factor 6 from Trypanosoma cruzi (strain CL Brener).